The sequence spans 341 residues: UDP-3-O-acylglucosamine N-acyltransferase (341 aa).

Residue histidine 239 is the Proton acceptor of the active site.

It belongs to the transferase hexapeptide repeat family. LpxD subfamily. As to quaternary structure, homotrimer.

The catalysed reaction is a UDP-3-O-[(3R)-3-hydroxyacyl]-alpha-D-glucosamine + a (3R)-hydroxyacyl-[ACP] = a UDP-2-N,3-O-bis[(3R)-3-hydroxyacyl]-alpha-D-glucosamine + holo-[ACP] + H(+). The protein operates within bacterial outer membrane biogenesis; LPS lipid A biosynthesis. Functionally, catalyzes the N-acylation of UDP-3-O-acylglucosamine using 3-hydroxyacyl-ACP as the acyl donor. Is involved in the biosynthesis of lipid A, a phosphorylated glycolipid that anchors the lipopolysaccharide to the outer membrane of the cell. This Shewanella sp. (strain MR-7) protein is UDP-3-O-acylglucosamine N-acyltransferase.